Here is a 678-residue protein sequence, read N- to C-terminus: MAKKFEIVSQYEPAGDQPVAITQLVEGLEDGEAFQTLLGVTGSGKTFTMANVIAKVQRPTIILAHNKTLAAQLYGEMKSFFPHNAVEYFVSYYDYYQPEAYVPASDTYIAKDSSVNEQIEQLRLSATKALMERKDVVLIATVSAIYGLGDPDQYLKMILQLRLGDTISQRDILQQLTTMQYTRNDVELWRGCFRVRGDVIDVFPAEAEEYAVRIELFDDEVDSLAWFDPLTGEVLTRPTRITVYPKSHYVTPKERVLQTIEQVKVELVSRLEELRSLNKLVEAQRLEERTRLDIEMMSELGYCSGIENYSRYLSGRASGEPPPTLLDYLPKNALMFIDESHVTIPQIGGMYKGDRSRKENLVTFGFRLPSAMDNRPMRFDEFEKIMPQTIFVSATPGKYEAEHESKIVEQVVRPTGLLDPVLEVRPALTQVDDLLGEIRLRVEKEERVLVTTLTKRMAENLTEYLEEHNVRVRYLHSDIDTVERIEIIRDLRLGEFDVLVGINLLREGLDIPEVSLVAILDADKEGFLRSDRSLIQTIGRAARNVAGKAILYADKITKSMQKAIDETERRRAKQIQHNTEQGITPQKLNKKITDILEDSPYAPKPGASAAKLKAAEADGEYSPQEMQRMTPAQLASEIKRMEKQMYQAAKDLDFELAAKLRDDLKRLKSSMVGVGDLR.

The 160-residue stretch at 26 to 185 folds into the Helicase ATP-binding domain; the sequence is EGLEDGEAFQ…LTTMQYTRND (160 aa). 39-46 provides a ligand contact to ATP; the sequence is GVTGSGKT. The Beta-hairpin motif lies at 92–115; that stretch reads YYDYYQPEAYVPASDTYIAKDSSV. Residues 430-596 form the Helicase C-terminal domain; the sequence is QVDDLLGEIR…KLNKKITDIL (167 aa). Residues 597-630 are disordered; that stretch reads EDSPYAPKPGASAAKLKAAEADGEYSPQEMQRMT. A UVR domain is found at 635 to 670; it reads ASEIKRMEKQMYQAAKDLDFELAAKLRDDLKRLKSS.

It belongs to the UvrB family. In terms of assembly, forms a heterotetramer with UvrA during the search for lesions. Interacts with UvrC in an incision complex.

It is found in the cytoplasm. Its function is as follows. The UvrABC repair system catalyzes the recognition and processing of DNA lesions. A damage recognition complex composed of 2 UvrA and 2 UvrB subunits scans DNA for abnormalities. Upon binding of the UvrA(2)B(2) complex to a putative damaged site, the DNA wraps around one UvrB monomer. DNA wrap is dependent on ATP binding by UvrB and probably causes local melting of the DNA helix, facilitating insertion of UvrB beta-hairpin between the DNA strands. Then UvrB probes one DNA strand for the presence of a lesion. If a lesion is found the UvrA subunits dissociate and the UvrB-DNA preincision complex is formed. This complex is subsequently bound by UvrC and the second UvrB is released. If no lesion is found, the DNA wraps around the other UvrB subunit that will check the other stand for damage. The protein is UvrABC system protein B of Hydrogenovibrio crunogenus (strain DSM 25203 / XCL-2) (Thiomicrospira crunogena).